Consider the following 535-residue polypeptide: Bifunctional purine biosynthesis protein PurH (535 aa).

One can recognise an MGS-like domain in the interval 6-151 (TRLPIRRALI…KNHKDVAIVV (146 aa)).

The protein belongs to the PurH family.

The catalysed reaction is (6R)-10-formyltetrahydrofolate + 5-amino-1-(5-phospho-beta-D-ribosyl)imidazole-4-carboxamide = 5-formamido-1-(5-phospho-D-ribosyl)imidazole-4-carboxamide + (6S)-5,6,7,8-tetrahydrofolate. The enzyme catalyses IMP + H2O = 5-formamido-1-(5-phospho-D-ribosyl)imidazole-4-carboxamide. It participates in purine metabolism; IMP biosynthesis via de novo pathway; 5-formamido-1-(5-phospho-D-ribosyl)imidazole-4-carboxamide from 5-amino-1-(5-phospho-D-ribosyl)imidazole-4-carboxamide (10-formyl THF route): step 1/1. Its pathway is purine metabolism; IMP biosynthesis via de novo pathway; IMP from 5-formamido-1-(5-phospho-D-ribosyl)imidazole-4-carboxamide: step 1/1. The polypeptide is Bifunctional purine biosynthesis protein PurH (Pseudomonas fluorescens (strain ATCC BAA-477 / NRRL B-23932 / Pf-5)).